A 309-amino-acid polypeptide reads, in one-letter code: Putative G-protein coupled receptor B0244.4 (309 aa).

6 helical membrane-spanning segments follow: residues S39–L59, Y82–L102, I114–V134, F162–A182, I204–L224, and W256–V276.

Belongs to the G-protein coupled receptor 1 family. B0244 subfamily.

It is found in the cell membrane. This Caenorhabditis elegans protein is Putative G-protein coupled receptor B0244.4.